The primary structure comprises 411 residues: Tyrosine--tRNA ligase (411 aa).

Y33 serves as a coordination point for L-tyrosine. A 'HIGH' region motif is present at residues 38-47 (PTADSLHLGN). Residues Y160 and Q164 each coordinate L-tyrosine. Positions 222-226 (KFGKS) match the 'KMSKS' region motif. ATP is bound at residue K225. Residues 346–410 (VNLVNFLVEN…GKKKILICKV (65 aa)) enclose the S4 RNA-binding domain.

It belongs to the class-I aminoacyl-tRNA synthetase family. TyrS type 1 subfamily. In terms of assembly, homodimer.

It localises to the cytoplasm. It carries out the reaction tRNA(Tyr) + L-tyrosine + ATP = L-tyrosyl-tRNA(Tyr) + AMP + diphosphate + H(+). In terms of biological role, catalyzes the attachment of tyrosine to tRNA(Tyr) in a two-step reaction: tyrosine is first activated by ATP to form Tyr-AMP and then transferred to the acceptor end of tRNA(Tyr). In Mycoplasmopsis synoviae (strain 53) (Mycoplasma synoviae), this protein is Tyrosine--tRNA ligase.